The chain runs to 493 residues: MRTNRLSWILVLSVVIFLVIINTINASDDEERLMVDVFRGYNSLIQPVRNSSELPLIVKMALQLVLLINVDEKDQVMHTNVWLTLQWHDFQMKWNPVNYGEIKQIRVSPDKVWLPDIVLFNNADGNYEVSFMCNVVINHKGDMLWVPPAIYKSSCIIDVEFFPFDEQVCTLVFGSWTYNENEIKLEFVQAELVDVSEYSASSIWDVIDVPASLVNKRSRIEFQVRIRRKTLFYTVVLIIPTVLMAFLSMAVFFLPTDSGEKITLTISVLLSIVVFLLLVSKILPPTSSTIPLMAKYLLLTFVLNVITILVTVIIINVYFRGPRTHRMPQWVRVVFLQFLPKLVCMKRPKSASERSAVRSGMAQLPGVGQFTLSPSAHHPLCPSADDRTTTIRNTASNETSAYYPLSTDALRAIDAIEYITEHLKRDEQHKSFRDDWKYVAMIIDRLLLYVFFGITVGGTCGILFSAPHVFQRIDQQEMLDRLKEKYDTASNIP.

An N-terminal signal peptide occupies residues 1 to 26 (MRTNRLSWILVLSVVIFLVIINTINA). N-linked (GlcNAc...) asparagine glycosylation is found at N25 and N50. The Extracellular segment spans residues 27–232 (SDDEERLMVD…QVRIRRKTLF (206 aa)). C155 and C169 are disulfide-bonded. Helical transmembrane passes span 233–254 (YTVV…VFFL), 262–280 (ITLT…LLVS), and 296–317 (YLLL…IINV). Over 318–445 (YFRGPRTHRM…WKYVAMIIDR (128 aa)) the chain is Cytoplasmic. The helical transmembrane segment at 446–466 (LLLYVFFGITVGGTCGILFSA) threads the bilayer.

Belongs to the ligand-gated ion channel (TC 1.A.9) family. Acetylcholine receptor (TC 1.A.9.1) subfamily. Interacts with lev-1. Component of nicotinic acetylcholine receptor composed of 2 non-alpha subunits lev-1 and unc-29, and 3 alpha subunits unc-38, unc-63 and lev-8. Interacts with oig-4. Interacts with crld-1.

The protein resides in the postsynaptic cell membrane. The protein localises to the cell membrane. Its function is as follows. Non-alpha subunit of nicotinic acetylcholine receptor (nAChR). Involved in nAChR sensitivity to nicotine and levasimole. In Caenorhabditis elegans, this protein is Acetylcholine receptor subunit beta-type unc-29.